The sequence spans 465 residues: Pancreatic triacylglycerol lipase (465 aa).

A signal peptide spans M1 to G16. 2 cysteine pairs are disulfide-bonded: C20–C26 and C107–C118. Catalysis depends on S169, which acts as the Nucleophile. An N-linked (GlcNAc...) asparagine glycan is attached at N183. D193 functions as the Charge relay system in the catalytic mechanism. E204, R207, D209, and D212 together coordinate Ca(2+). A disulfide bridge connects residues C254 and C278. H280 acts as the Charge relay system in catalysis. Intrachain disulfides connect C302-C313, C316-C321, and C449-C465. Residues W355–C465 enclose the PLAT domain.

This sequence belongs to the AB hydrolase superfamily. Lipase family. In terms of assembly, forms a 1:1 stoichiometric complex with (pro)colipase/CLPS.

The protein localises to the secreted. The catalysed reaction is a triacylglycerol + H2O = a diacylglycerol + a fatty acid + H(+). It catalyses the reaction 1,2,3-tributanoylglycerol + H2O = dibutanoylglycerol + butanoate + H(+). The enzyme catalyses 1,2,3-tri-(9Z-octadecenoyl)-glycerol + H2O = di-(9Z)-octadecenoylglycerol + (9Z)-octadecenoate + H(+). It carries out the reaction all-trans-retinyl hexadecanoate + H2O = all-trans-retinol + hexadecanoate + H(+). The catalysed reaction is 1,2-di-(9Z-octadecenoyl)-glycerol + H2O = (9Z-octadecenoyl)-glycerol + (9Z)-octadecenoate + H(+). With respect to regulation, inhibited by bile salts, is reactivated by (pro)colipase/CLPS. Its function is as follows. Plays an important role in fat metabolism. It preferentially splits the esters of long-chain fatty acids at positions 1 and 3, producing mainly 2-monoacylglycerol and free fatty acids, and shows considerably higher activity against insoluble emulsified substrates than against soluble ones. This is Pancreatic triacylglycerol lipase from Homo sapiens (Human).